Consider the following 421-residue polypeptide: Protein HOMOLOG OF MAMMALIAN LYST-INTERACTING PROTEIN 5 (421 aa).

N-acetylserine is present on Ser2. The segment at 146–374 (IKEGRKPTPG…KYHYDSSYQP (229 aa)) is disordered. The span at 165-185 (SIPSSGPSGSYDHSASDTNTT) shows a compositional bias: polar residues. Basic and acidic residues predominate over residues 188–207 (HRTELDPPHDSNDDSSHHQF). Over residues 245–258 (LPPPTGPSDSPYPH) the composition is skewed to pro residues. Residues 278–293 (NYSSHEPSPNSLPNFQ) show a composition bias toward polar residues. Low complexity-rich tracts occupy residues 294 to 308 (SYPSFSESSLPSTSP) and 317 to 337 (PEPYYSSPHSAPAPSSTSFSS).

Belongs to the VTA1 family. Homodimer. Interacts with SKD1/VPS4, VPS60-1, CHMP1A and CHMP1B. Binds to PROS/At4g24370. Interacts with MPK6 and MPK3. Phosphorylated by activated MPK6 and MPK3, this activation is required to trigger multivesicular bodies (MVBs) trafficking upon plant infection.

The protein localises to the cytoplasm. It is found in the endosome membrane. Its subcellular location is the nucleus. The protein resides in the endosome. It localises to the multivesicular body. In terms of biological role, involved in the endosomal multivesicular bodies (MVB) pathway. MVBs contain intraluminal vesicles (ILVs) that are generated by invagination and scission from the limiting membrane of the endosome and are delivered to lysosomes enabling degradation of membrane proteins. Thought to be a cofactor of SKD1/VPS4, which catalyzes the disassembly of membrane-associated ESCRT-III. Target of pathogen-responsive mitogen-activated protein kinases (MPKs) that plays a critical role in plant basal resistance to Pseudomonas syringae in a SKD1-dependent manner by promoting multivesicular bodies (MVBs) trafficking upon plant infection. This Arabidopsis thaliana (Mouse-ear cress) protein is Protein HOMOLOG OF MAMMALIAN LYST-INTERACTING PROTEIN 5.